A 455-amino-acid chain; its full sequence is Tubulin delta chain (455 aa).

143–149 (AGGTGSG) lines the GTP pocket.

It belongs to the tubulin family. In terms of assembly, found in a complex with TEDC1, TEDC2, TUBE1 and TUBD1. As to expression, highly expressed in testis.

Its subcellular location is the cell projection. The protein resides in the cilium. It localises to the cytoplasm. The protein localises to the cytoskeleton. It is found in the microtubule organizing center. Its subcellular location is the centrosome. The protein resides in the centriole. It localises to the nucleus. Functionally, acts as a positive regulator of hedgehog signaling and regulates ciliary function. The polypeptide is Tubulin delta chain (Tubd1) (Mus musculus (Mouse)).